We begin with the raw amino-acid sequence, 838 residues long: Leucine--tRNA ligase (838 aa).

Positions 36-46 (PYPSGKIHMGH) match the 'HIGH' region motif. Residues 611–615 (KMSKS) carry the 'KMSKS' region motif. Lysine 614 provides a ligand contact to ATP.

The protein belongs to the class-I aminoacyl-tRNA synthetase family.

It localises to the cytoplasm. It carries out the reaction tRNA(Leu) + L-leucine + ATP = L-leucyl-tRNA(Leu) + AMP + diphosphate. The chain is Leucine--tRNA ligase from Wolbachia pipientis wMel.